Reading from the N-terminus, the 363-residue chain is Ribosome-binding ATPase YchF (363 aa).

Positions Phe-3 to Met-256 constitute an OBG-type G domain. Asn-12–Thr-17 is a binding site for ATP. Mg(2+) contacts are provided by Ser-16 and Thr-36. In terms of domain architecture, TGS spans Asn-278–Phe-361.

The protein belongs to the TRAFAC class OBG-HflX-like GTPase superfamily. OBG GTPase family. YchF/OLA1 subfamily. Mg(2+) serves as cofactor.

ATPase that binds to both the 70S ribosome and the 50S ribosomal subunit in a nucleotide-independent manner. The sequence is that of Ribosome-binding ATPase YchF from Escherichia coli O157:H7.